The sequence spans 281 residues: Inositol diphosphatase SIW14 (281 aa).

The disordered stretch occupies residues 1–20; sequence MGLYQAKNDEGSDPKSSSKI. A compositionally biased stretch (basic and acidic residues) spans 7 to 20; the sequence is KNDEGSDPKSSSKI. Residue Ser-94 is modified to Phosphoserine. One can recognise a Tyrosine-protein phosphatase domain in the interval 121–271; the sequence is NFSHVVGEIY…YDDDEIKRIA (151 aa). 1D-myo-inositol hexakisphosphate is bound by residues Asn-189, Ile-190, and His-193. Cys-214 acts as the Phosphocysteine intermediate in catalysis.

The protein belongs to the protein-tyrosine phosphatase family. Atypical dual-specificity phosphatase Siw14-like subfamily. As to quaternary structure, monomer.

Its subcellular location is the cytoplasm. It carries out the reaction 5-diphospho-1D-myo-inositol 1,2,3,4,6-pentakisphosphate + H2O = 1D-myo-inositol hexakisphosphate + phosphate + H(+). The catalysed reaction is 5-diphospho-1D-myo-inositol 1,3,4,6-tetrakisphosphate + H2O = 1D-myo-inositol 1,3,4,5,6-pentakisphosphate + phosphate + H(+). It catalyses the reaction 3,5-bis(diphospho)-1D-myo-inositol 1,2,4,6-tetrakisphosphate + H2O = 3-diphospho-1D-myo-inositol 1,2,4,5,6-pentakisphosphate + phosphate + 2 H(+). The enzyme catalyses 1,5-bis(diphospho)-1D-myo-inositol 2,3,4,6-tetrakisphosphate + H2O = 1-diphospho-1D-myo-inositol 2,3,4,5,6-pentakisphosphate + phosphate + 2 H(+). It carries out the reaction 6-diphospho-1D-myo-inositol pentakisphosphate + H2O = 1D-myo-inositol hexakisphosphate + phosphate + H(+). Functionally, selectively cleaves the beta-phosphate at the 5-position of soluble inositol pyrophosphates. Converts 5-diphosphoinositol tetrakisphosphate (5-PP-InsP(4)) into inositol pentakisphosphate (InsP(5)), 5-diphosphoinositol pentakisphosphate (5-PP-IP(5) or 5-InsP(7)) into inositol hexakisphosphate (IP(6) or InsP(6)), and 1,5-bisdiphosphoinositol tetrakisphosphate (1,5-PP-IP(5) or InsP(8)) into 1-diphosphoinositol pentakisphosphate (1-PP-IP(5) or 1-InsP(7)). Also has activity on 1,5-bis-diphosphoinositol 2,3,4,6-tetrakisphosphate (1,5-InsP(8)) and 3,5-InsP(8). Modulates inositol pyrophosphate metabolism that may have an influence in stress response. Plays a role in actin filament organization and endocytosis. Functions as a prion suppressing factor possibly due to its phosphatase activity against inositol pyrophosphates, which are signal transduction molecules involved in prion propagation. The polypeptide is Inositol diphosphatase SIW14 (SIW14) (Saccharomyces cerevisiae (strain ATCC 204508 / S288c) (Baker's yeast)).